A 293-amino-acid polypeptide reads, in one-letter code: 33 kDa chaperonin (293 aa).

2 disulfide bridges follow: Cys-235–Cys-237 and Cys-267–Cys-270.

This sequence belongs to the HSP33 family. Under oxidizing conditions two disulfide bonds are formed involving the reactive cysteines. Under reducing conditions zinc is bound to the reactive cysteines and the protein is inactive.

It is found in the cytoplasm. Its function is as follows. Redox regulated molecular chaperone. Protects both thermally unfolding and oxidatively damaged proteins from irreversible aggregation. Plays an important role in the bacterial defense system toward oxidative stress. The sequence is that of 33 kDa chaperonin from Deinococcus radiodurans (strain ATCC 13939 / DSM 20539 / JCM 16871 / CCUG 27074 / LMG 4051 / NBRC 15346 / NCIMB 9279 / VKM B-1422 / R1).